Here is a 163-residue protein sequence, read N- to C-terminus: GTP-dependent dephospho-CoA kinase (163 aa).

GTP-binding residues include D38, V39, D57, E115, and D138.

It belongs to the GTP-dependent DPCK family.

It catalyses the reaction 3'-dephospho-CoA + GTP = GDP + CoA + H(+). It participates in cofactor biosynthesis; coenzyme A biosynthesis. Catalyzes the GTP-dependent phosphorylation of the 3'-hydroxyl group of dephosphocoenzyme A to form coenzyme A (CoA). The protein is GTP-dependent dephospho-CoA kinase of Methanothermobacter thermautotrophicus (strain ATCC 29096 / DSM 1053 / JCM 10044 / NBRC 100330 / Delta H) (Methanobacterium thermoautotrophicum).